A 257-amino-acid chain; its full sequence is NAD-capped RNA hydrolase NudC (257 aa).

Arg-69 contacts substrate. Residues Cys-98 and Cys-101 each contribute to the Zn(2+) site. A substrate-binding site is contributed by Glu-111. Positions 116 and 119 each coordinate Zn(2+). Tyr-124 serves as a coordination point for substrate. The region spanning 125-248 (PQIAPCIIVA…TVARRLIEDT (124 aa)) is the Nudix hydrolase domain. Residues Ala-158, Glu-174, and Glu-178 each contribute to the a divalent metal cation site. Residues 159–180 (GFVEVGETLEQAVAREVMEESG) carry the Nudix box motif. A substrate-binding site is contributed by 192 to 199 (QPWPFPQS). A divalent metal cation is bound at residue Glu-219. Ala-241 contacts substrate.

Belongs to the Nudix hydrolase family. NudC subfamily. As to quaternary structure, homodimer. Mg(2+) is required as a cofactor. Mn(2+) serves as cofactor. Requires Zn(2+) as cofactor.

It carries out the reaction a 5'-end NAD(+)-phospho-ribonucleoside in mRNA + H2O = a 5'-end phospho-adenosine-phospho-ribonucleoside in mRNA + beta-nicotinamide D-ribonucleotide + 2 H(+). It catalyses the reaction NAD(+) + H2O = beta-nicotinamide D-ribonucleotide + AMP + 2 H(+). The catalysed reaction is NADH + H2O = reduced beta-nicotinamide D-ribonucleotide + AMP + 2 H(+). MRNA decapping enzyme that specifically removes the nicotinamide adenine dinucleotide (NAD) cap from a subset of mRNAs by hydrolyzing the diphosphate linkage to produce nicotinamide mononucleotide (NMN) and 5' monophosphate mRNA. The NAD-cap is present at the 5'-end of some mRNAs and stabilizes RNA against 5'-processing. Has preference for mRNAs with a 5'-end purine. Catalyzes the hydrolysis of a broad range of dinucleotide pyrophosphates. This is NAD-capped RNA hydrolase NudC from Salmonella choleraesuis (strain SC-B67).